Consider the following 708-residue polypeptide: Elongation factor G (708 aa).

In terms of domain architecture, tr-type G spans 8–290 (KRYRNIGISA…AVIQYLPAPM (283 aa)). GTP contacts are provided by residues 17–24 (AHIDAGKT), 88–92 (DTPGH), and 142–145 (NKMD).

The protein belongs to the TRAFAC class translation factor GTPase superfamily. Classic translation factor GTPase family. EF-G/EF-2 subfamily.

The protein resides in the cytoplasm. Functionally, catalyzes the GTP-dependent ribosomal translocation step during translation elongation. During this step, the ribosome changes from the pre-translocational (PRE) to the post-translocational (POST) state as the newly formed A-site-bound peptidyl-tRNA and P-site-bound deacylated tRNA move to the P and E sites, respectively. Catalyzes the coordinated movement of the two tRNA molecules, the mRNA and conformational changes in the ribosome. This chain is Elongation factor G, found in Psychrobacter arcticus (strain DSM 17307 / VKM B-2377 / 273-4).